The primary structure comprises 601 residues: DNA ligase (601 aa).

Asp258 serves as a coordination point for ATP. Catalysis depends on Lys260, which acts as the N6-AMP-lysine intermediate. ATP contacts are provided by Arg265, Arg280, Glu310, Phe350, Arg427, and Lys433.

This sequence belongs to the ATP-dependent DNA ligase family. In terms of assembly, interacts with the PCNA heterotrimer, probably via subunit PCNA3. A divalent metal cation serves as cofactor.

The enzyme catalyses ATP + (deoxyribonucleotide)n-3'-hydroxyl + 5'-phospho-(deoxyribonucleotide)m = (deoxyribonucleotide)n+m + AMP + diphosphate.. Ligase activity stimulated by PCNA heterotrimer. DNA ligase that seals nicks in double-stranded DNA during DNA replication, DNA recombination and DNA repair. Interaction with PCNA enhances ligase activity. DNA polymerase I, DNA ligase and the flap endonuclease may be constitutively associated with the PCNA heterotrimer forming a scanning complex able to couple DNA synthesis and Okazaki fragment maturation. The protein is DNA ligase of Saccharolobus solfataricus (strain ATCC 35092 / DSM 1617 / JCM 11322 / P2) (Sulfolobus solfataricus).